Consider the following 536-residue polypeptide: Phosphoenolpyruvate carboxykinase (ATP) (536 aa).

Substrate contacts are provided by R61, Y195, and K201. ATP contacts are provided by residues K201, H220, and 236 to 244; that span reads GLSGTGKTT. Mn(2+) contacts are provided by K201 and H220. A Mn(2+)-binding site is contributed by D257. 3 residues coordinate ATP: E285, R322, and T447. A substrate-binding site is contributed by R322.

It belongs to the phosphoenolpyruvate carboxykinase (ATP) family. It depends on Mn(2+) as a cofactor.

It is found in the cytoplasm. The enzyme catalyses oxaloacetate + ATP = phosphoenolpyruvate + ADP + CO2. It functions in the pathway carbohydrate biosynthesis; gluconeogenesis. In terms of biological role, involved in the gluconeogenesis. Catalyzes the conversion of oxaloacetate (OAA) to phosphoenolpyruvate (PEP) through direct phosphoryl transfer between the nucleoside triphosphate and OAA. This Rhizobium leguminosarum bv. trifolii (strain WSM2304) protein is Phosphoenolpyruvate carboxykinase (ATP).